A 380-amino-acid polypeptide reads, in one-letter code: 3-dehydroquinate synthase (380 aa).

NAD(+)-binding positions include 68–73 (PGEPNK), 102–106 (GTVLD), 126–127 (TT), Lys-139, and Lys-148. Zn(2+)-binding residues include Glu-181, His-243, and His-259.

Belongs to the sugar phosphate cyclases superfamily. Dehydroquinate synthase family. NAD(+) serves as cofactor. The cofactor is Co(2+). It depends on Zn(2+) as a cofactor.

It is found in the cytoplasm. It carries out the reaction 7-phospho-2-dehydro-3-deoxy-D-arabino-heptonate = 3-dehydroquinate + phosphate. Its pathway is metabolic intermediate biosynthesis; chorismate biosynthesis; chorismate from D-erythrose 4-phosphate and phosphoenolpyruvate: step 2/7. Catalyzes the conversion of 3-deoxy-D-arabino-heptulosonate 7-phosphate (DAHP) to dehydroquinate (DHQ). The protein is 3-dehydroquinate synthase (aroB) of Chlamydia pneumoniae (Chlamydophila pneumoniae).